The primary structure comprises 214 residues: Probable transaldolase (214 aa).

K83 functions as the Schiff-base intermediate with substrate in the catalytic mechanism.

The protein belongs to the transaldolase family. Type 3B subfamily.

The protein resides in the cytoplasm. The catalysed reaction is D-sedoheptulose 7-phosphate + D-glyceraldehyde 3-phosphate = D-erythrose 4-phosphate + beta-D-fructose 6-phosphate. Its pathway is carbohydrate degradation; pentose phosphate pathway; D-glyceraldehyde 3-phosphate and beta-D-fructose 6-phosphate from D-ribose 5-phosphate and D-xylulose 5-phosphate (non-oxidative stage): step 2/3. In terms of biological role, transaldolase is important for the balance of metabolites in the pentose-phosphate pathway. This Brevibacillus brevis (strain 47 / JCM 6285 / NBRC 100599) protein is Probable transaldolase.